Consider the following 228-residue polypeptide: Probable 26S proteasome regulatory subunit p28 (228 aa).

6 ANK repeats span residues methionine 1 to leucine 30, aspartate 35 to leucine 64, serine 71 to leucine 100, glutamine 106 to isoleucine 135, phenylalanine 139 to asparagine 168, and glutamine 173 to leucine 203.

Interacts with RPT3.

In terms of biological role, acts as a chaperone during the assembly of the 26S proteasome, specifically of the 19S regulatory complex (RC) and appears to have an overlapping role with RPN14. This chain is Probable 26S proteasome regulatory subunit p28 (NAS6), found in Saccharomyces cerevisiae (strain ATCC 204508 / S288c) (Baker's yeast).